The sequence spans 259 residues: 3-oxo-5-alpha-steroid 4-dehydrogenase 1 (259 aa).

5 helical membrane passes run 12 to 29 (LLAA…AVFA), 86 to 106 (ILLA…PFLM), 111 to 131 (PMPL…GYLQ), 151 to 171 (FLIG…SDHI), and 209 to 229 (YALA…FCFL).

The protein belongs to the steroid 5-alpha reductase family. As to expression, liver and prostate (at a low level).

The protein localises to the microsome membrane. It localises to the endoplasmic reticulum membrane. It catalyses the reaction a 3-oxo-5alpha-steroid + NADP(+) = a 3-oxo-Delta(4)-steroid + NADPH + H(+). It carries out the reaction androst-4-ene-3,17-dione + NADPH + H(+) = 5alpha-androstan-3,17-dione + NADP(+). The enzyme catalyses 5alpha-pregnane-3,20-dione + NADP(+) = progesterone + NADPH + H(+). The catalysed reaction is 17beta-hydroxy-5alpha-androstan-3-one + NADP(+) = testosterone + NADPH + H(+). Converts testosterone into 5-alpha-dihydrotestosterone and progesterone or corticosterone into their corresponding 5-alpha-3-oxosteroids. It plays a central role in sexual differentiation and androgen physiology. This Homo sapiens (Human) protein is 3-oxo-5-alpha-steroid 4-dehydrogenase 1.